A 259-amino-acid polypeptide reads, in one-letter code: Binding partner of ACD11 1 (259 aa).

The region spanning 6–77 is the RRM domain; the sequence is RSVKVGNLSS…QSVIIELAPN (72 aa). Positions 219–259 are disordered; sequence GEVGQKTKEKVEAEQPSQPAQSQQQLPEGYSPIHSSEYSKN. Over residues 232–243 the composition is skewed to low complexity; that stretch reads EQPSQPAQSQQQ.

In terms of assembly, interacts with ACD11, PR1F2 and PR1F3.

The protein localises to the cytoplasm. The protein resides in the membrane. This chain is Binding partner of ACD11 1 (BPA1), found in Arabidopsis thaliana (Mouse-ear cress).